A 396-amino-acid chain; its full sequence is NADH-quinone oxidoreductase subunit D (396 aa).

Belongs to the complex I 49 kDa subunit family. NDH-1 is composed of 14 different subunits. Subunits NuoB, C, D, E, F, and G constitute the peripheral sector of the complex.

The protein resides in the cell inner membrane. The catalysed reaction is a quinone + NADH + 5 H(+)(in) = a quinol + NAD(+) + 4 H(+)(out). Its function is as follows. NDH-1 shuttles electrons from NADH, via FMN and iron-sulfur (Fe-S) centers, to quinones in the respiratory chain. The immediate electron acceptor for the enzyme in this species is believed to be ubiquinone. Couples the redox reaction to proton translocation (for every two electrons transferred, four hydrogen ions are translocated across the cytoplasmic membrane), and thus conserves the redox energy in a proton gradient. The polypeptide is NADH-quinone oxidoreductase subunit D (Orientia tsutsugamushi (strain Boryong) (Rickettsia tsutsugamushi)).